Consider the following 703-residue polypeptide: Centrosomal protein of 63 kDa (703 aa).

Met-1 is subject to N-acetylmethionine. Coiled coils occupy residues 22–199 (EAEL…ESVE), 242–306 (MTVL…QHAV), 353–533 (LEGS…STQM), and 676–703 (HILE…TALK). Ser-278 is subject to Phosphoserine.

The protein belongs to the CEP63 family. Interacts with CEP152 and CDK1; these interactions recruit both ligands to centrosomes. Interacts with CDK2, CDK5RAP2, WDR62, CEP90, KIAA0753/moonraker and CCDC14. CEP63, CDK5RAP2, CEP152, WDR62 are proposed to form a stepwise assembled complex at the centrosome forming a ring near parental centrioles. Interacts with CCDC57; the interaction is required for their location to proximal end of centrioles. Interacts with FXR1; promoting its stabilization. As to quaternary structure, (Microbial infection) Interacts with zika virus serine protease NS3; this interaction disorganizes the centrosome. Post-translationally, polyubiquitinated via 'Lys-48'-linked ubiquitin, leading to its degradation. Deubiquitinated by USP36, promoting its stabilization.

The protein resides in the cytoplasm. It is found in the cytoskeleton. The protein localises to the microtubule organizing center. It localises to the centrosome. Its subcellular location is the centriole. The protein resides in the centriolar satellite. In terms of biological role, required for normal spindle assembly. Plays a key role in mother-centriole-dependent centriole duplication; the function seems also to involve CEP152, CDK5RAP2 and WDR62 through a stepwise assembled complex at the centrosome that recruits CDK2 required for centriole duplication. Reported to be required for centrosomal recruitment of CEP152; however, this function has been questioned. Also recruits CDK1 to centrosomes. Plays a role in DNA damage response. Following DNA damage, such as double-strand breaks (DSBs), is removed from centrosomes; this leads to the inactivation of spindle assembly and delay in mitotic progression. Promotes stabilization of FXR1 protein by inhibiting FXR1 ubiquitination. This chain is Centrosomal protein of 63 kDa, found in Homo sapiens (Human).